Here is a 125-residue protein sequence, read N- to C-terminus: UPF0538 protein C2C4.04c (125 aa).

This sequence belongs to the UPF0538 family.

In Schizosaccharomyces pombe (strain 972 / ATCC 24843) (Fission yeast), this protein is UPF0538 protein C2C4.04c.